A 322-amino-acid chain; its full sequence is 4-diphosphocytidyl-2-C-methyl-D-erythritol kinase (322 aa).

Lys-25 is a catalytic residue. Residue 110–120 (PVAGGMAGGSA) coordinates ATP. Residue Asp-152 is part of the active site.

This sequence belongs to the GHMP kinase family. IspE subfamily.

The catalysed reaction is 4-CDP-2-C-methyl-D-erythritol + ATP = 4-CDP-2-C-methyl-D-erythritol 2-phosphate + ADP + H(+). It participates in isoprenoid biosynthesis; isopentenyl diphosphate biosynthesis via DXP pathway; isopentenyl diphosphate from 1-deoxy-D-xylulose 5-phosphate: step 3/6. In terms of biological role, catalyzes the phosphorylation of the position 2 hydroxy group of 4-diphosphocytidyl-2C-methyl-D-erythritol. The polypeptide is 4-diphosphocytidyl-2-C-methyl-D-erythritol kinase (Mycolicibacterium gilvum (strain PYR-GCK) (Mycobacterium gilvum (strain PYR-GCK))).